The primary structure comprises 1328 residues: DNA-directed RNA polymerase subunit beta (1328 aa).

Belongs to the RNA polymerase beta chain family. As to quaternary structure, the RNAP catalytic core consists of 2 alpha, 1 beta, 1 beta' and 1 omega subunit. When a sigma factor is associated with the core the holoenzyme is formed, which can initiate transcription.

The catalysed reaction is RNA(n) + a ribonucleoside 5'-triphosphate = RNA(n+1) + diphosphate. In terms of biological role, DNA-dependent RNA polymerase catalyzes the transcription of DNA into RNA using the four ribonucleoside triphosphates as substrates. The protein is DNA-directed RNA polymerase subunit beta of Karelsulcia muelleri (strain GWSS) (Sulcia muelleri).